A 621-amino-acid polypeptide reads, in one-letter code: 1-deoxy-D-xylulose-5-phosphate synthase (621 aa).

Thiamine diphosphate is bound by residues His-80 and 121–123 (GHS). Asp-152 provides a ligand contact to Mg(2+). Residues 153-154 (GA), Asn-181, Tyr-288, and Glu-370 contribute to the thiamine diphosphate site. Position 181 (Asn-181) interacts with Mg(2+).

It belongs to the transketolase family. DXPS subfamily. Homodimer. Requires Mg(2+) as cofactor. Thiamine diphosphate is required as a cofactor.

The enzyme catalyses D-glyceraldehyde 3-phosphate + pyruvate + H(+) = 1-deoxy-D-xylulose 5-phosphate + CO2. Its pathway is metabolic intermediate biosynthesis; 1-deoxy-D-xylulose 5-phosphate biosynthesis; 1-deoxy-D-xylulose 5-phosphate from D-glyceraldehyde 3-phosphate and pyruvate: step 1/1. Its function is as follows. Catalyzes the acyloin condensation reaction between C atoms 2 and 3 of pyruvate and glyceraldehyde 3-phosphate to yield 1-deoxy-D-xylulose-5-phosphate (DXP). This Vibrio parahaemolyticus serotype O3:K6 (strain RIMD 2210633) protein is 1-deoxy-D-xylulose-5-phosphate synthase.